The chain runs to 182 residues: Ferritin heavy chain (182 aa).

M1 is modified (N-acetylmethionine). Residue T2 is modified to N-acetylthreonine; in Ferritin heavy chain, N-terminally processed. Positions 11–160 constitute a Ferritin-like diiron domain; it reads QNYHQDAEAA…DHVTNLRKMG (150 aa). Fe cation-binding residues include E28, E63, H66, E108, and Q142.

This sequence belongs to the ferritin family. As to quaternary structure, oligomer of 24 subunits. There are two types of subunits: L (light) chain and H (heavy) chain. The major chain can be light or heavy, depending on the species and tissue type. The functional molecule forms a roughly spherical shell with a diameter of 12 nm and contains a central cavity into which the insoluble mineral iron core is deposited. Interacts with NCOA4; NCOA4 promotes targeting of the iron-binding ferritin complex to autolysosomes following starvation or iron depletion.

The protein localises to the cytoplasm. It is found in the cytoplasmic vesicle. Its subcellular location is the autophagosome. The protein resides in the autolysosome. The enzyme catalyses 4 Fe(2+) + O2 + 4 H(+) = 4 Fe(3+) + 2 H2O. Its function is as follows. Stores iron in a soluble, non-toxic, readily available form. Important for iron homeostasis. Has ferroxidase activity. Iron is taken up in the ferrous form and deposited as ferric hydroxides after oxidation. Also plays a role in delivery of iron to cells. Mediates iron uptake in capsule cells of the developing kidney. Degraded to release iron upon autophagy activation by nutrient starvation. This Mus musculus (Mouse) protein is Ferritin heavy chain (Fth1).